We begin with the raw amino-acid sequence, 116 residues long: Nitrogenase-stabilizing/protective protein NifW (116 aa).

It belongs to the NifW family. Homotrimer; associates with NifD.

In terms of biological role, may protect the nitrogenase Fe-Mo protein from oxidative damage. The polypeptide is Nitrogenase-stabilizing/protective protein NifW (Rhodopseudomonas palustris (strain TIE-1)).